We begin with the raw amino-acid sequence, 304 residues long: Virulence protein VirA (304 aa).

In terms of biological role, could be involved in the biosynthesis of a major surface antigen important for virulence. The sequence is that of Virulence protein VirA (virA) from Vibrio anguillarum (strain ATCC 68554 / 775) (Listonella anguillarum).